Consider the following 689-residue polypeptide: Glycine--tRNA ligase beta subunit (689 aa).

This sequence belongs to the class-II aminoacyl-tRNA synthetase family. In terms of assembly, tetramer of two alpha and two beta subunits.

The protein resides in the cytoplasm. The catalysed reaction is tRNA(Gly) + glycine + ATP = glycyl-tRNA(Gly) + AMP + diphosphate. In Yersinia pseudotuberculosis serotype O:1b (strain IP 31758), this protein is Glycine--tRNA ligase beta subunit.